A 293-amino-acid chain; its full sequence is Protein translocase subunit SecF (293 aa).

6 helical membrane passes run 10 to 30, 130 to 150, 158 to 178, 185 to 205, 244 to 264, and 267 to 287; these read ARIF…SMFA, VKSA…YITI, LAAI…FSVL, SFVA…IVVF, LFAV…FSFA, and VGFC…WLFF.

It belongs to the SecD/SecF family. SecF subfamily. Forms a complex with SecD. Part of the essential Sec protein translocation apparatus which comprises SecA, SecYEG and auxiliary proteins SecDF. Other proteins may also be involved.

Its subcellular location is the cell membrane. Part of the Sec protein translocase complex. Interacts with the SecYEG preprotein conducting channel. SecDF uses the proton motive force (PMF) to complete protein translocation after the ATP-dependent function of SecA. This Acidaminococcus fermentans (strain ATCC 25085 / DSM 20731 / CCUG 9996 / CIP 106432 / VR4) protein is Protein translocase subunit SecF.